A 351-amino-acid polypeptide reads, in one-letter code: Transmembrane protein DDB_G0272716 (351 aa).

N-linked (GlcNAc...) asparagine glycosylation is found at Asn4 and Asn59. 2 helical membrane passes run 175–195 (FSSLFGVISGFLGIGSVTAIG) and 215–235 (VVAPICAPVLLTFGCLVGAFI). N-linked (GlcNAc...) asparagine glycosylation is present at Asn345.

It is found in the membrane. In Dictyostelium discoideum (Social amoeba), this protein is Transmembrane protein DDB_G0272716.